A 177-amino-acid polypeptide reads, in one-letter code: Calcium-binding protein CML38 (177 aa).

A compositionally biased stretch (polar residues) spans 1–11; it reads MKNNTQPQSSF. The tract at residues 1–44 is disordered; the sequence is MKNNTQPQSSFKKLCRKLSPKREDSAGEIQQHNSSNGEDKNREL. EF-hand domains are found at residues 39 to 74, 75 to 110, 111 to 146, and 147 to 177; these read DKNR…LGEQ, LSDE…DDEE, EKKM…LGES, and RTTD…LMMR. Ca(2+) is bound by residues Asp52, Asn54, Asp56, Arg58, Glu63, Asp88, Asp90, Asp92, Met94, and Glu99. Residues Asp160, Asn162, Asp164, and Glu171 each coordinate Ca(2+).

As to quaternary structure, binds to ABCG36. As to expression, expressed in cotyledons and guard cells of young leaves. In mature root, expressed in the epidermis, trichoblasts, young lateral root and root tip. Expressed from stage 9 to 15 of flower development in anther wall.

Functionally, potential calcium sensor that binds calcium in vitro. The protein is Calcium-binding protein CML38 of Arabidopsis thaliana (Mouse-ear cress).